Here is a 324-residue protein sequence, read N- to C-terminus: Glyoxylate/hydroxypyruvate reductase B (324 aa).

Active-site residues include Arg237 and Glu266. Catalysis depends on His285, which acts as the Proton donor.

It belongs to the D-isomer specific 2-hydroxyacid dehydrogenase family. GhrB subfamily. Homodimer.

The protein localises to the cytoplasm. It catalyses the reaction glycolate + NADP(+) = glyoxylate + NADPH + H(+). It carries out the reaction (R)-glycerate + NAD(+) = 3-hydroxypyruvate + NADH + H(+). The enzyme catalyses (R)-glycerate + NADP(+) = 3-hydroxypyruvate + NADPH + H(+). Catalyzes the NADPH-dependent reduction of glyoxylate and hydroxypyruvate into glycolate and glycerate, respectively. The chain is Glyoxylate/hydroxypyruvate reductase B from Citrobacter koseri (strain ATCC BAA-895 / CDC 4225-83 / SGSC4696).